A 127-amino-acid chain; its full sequence is Large ribosomal subunit protein bL19 (127 aa).

Belongs to the bacterial ribosomal protein bL19 family.

Functionally, this protein is located at the 30S-50S ribosomal subunit interface and may play a role in the structure and function of the aminoacyl-tRNA binding site. The chain is Large ribosomal subunit protein bL19 from Roseobacter denitrificans (strain ATCC 33942 / OCh 114) (Erythrobacter sp. (strain OCh 114)).